The following is a 280-amino-acid chain: Alpha-methyl-mannoside-specific lectin (280 aa).

Residues 1–26 (MAISKKILPLLSIATIFLLLLNKAHS) form the signal peptide. 2 residues coordinate a carbohydrate: D114 and G134. Mn(2+) is bound by residues E156 and D158. 2 residues coordinate Ca(2+): D158 and F160. A carbohydrate is bound by residues S165 and N166. 2 residues coordinate Ca(2+): N166 and D169. The Mn(2+) site is built by D169 and H174. Residues G248 and Q250 each contribute to the a carbohydrate site.

It belongs to the leguminous lectin family. As to quaternary structure, homodimer. Glycosylated.

Its function is as follows. Alpha-methyl-D-mannoside-specific lectin. Has hemagglutinating activity towards rabbit erythrocytes. Binds to cytokinins and significantly inhibits physiological effects of cytokinin activity such as cotyledon expansion and delayed leaf senescence. This is Alpha-methyl-mannoside-specific lectin from Arachis hypogaea (Peanut).